Here is a 339-residue protein sequence, read N- to C-terminus: Ubiquitin carboxyl-terminal hydrolase 50 (339 aa).

The region spanning 44–339 is the USP domain; the sequence is TGLWNLGNTC…AFCKNSVTQA (296 aa). The active-site Nucleophile is the cysteine 53. Residue histidine 327 is the Proton acceptor of the active site.

This sequence belongs to the peptidase C19 family. As to expression, weakly expressed in a few tissues.

It localises to the cytoplasm. Its subcellular location is the cytoskeleton. The protein resides in the microtubule organizing center. The protein localises to the centrosome. It is found in the nucleus. It catalyses the reaction Thiol-dependent hydrolysis of ester, thioester, amide, peptide and isopeptide bonds formed by the C-terminal Gly of ubiquitin (a 76-residue protein attached to proteins as an intracellular targeting signal).. Its function is as follows. Deubiquitinating enzyme that removes conjugated ubiquitin from specific proteins to regulate different cellular processes. Regulates the inflammasome signaling pathway by deubiquitinating 'Lys-63'-linked polyubiquitination of the PYCARD/ASC adapter protein. Regulates the ubiquitination and stability of the ACE2 protein. Acts as a negative regulator of the G2/M checkpoint pathway, by preventing serine/threonine kinase WEE1 degradation, thereby repressing entry into mitosis following activation of the G2/M DNA damage checkpoint. This is Ubiquitin carboxyl-terminal hydrolase 50 from Homo sapiens (Human).